Consider the following 445-residue polypeptide: Argininosuccinate synthase (445 aa).

ATP is bound by residues 18–26 (AFSGGLDTS) and Ala44. L-citrulline is bound at residue Tyr100. ATP-binding residues include Gly130 and Thr132. 3 residues coordinate L-aspartate: Thr132, Asn136, and Asp137. Asn136 lines the L-citrulline pocket. Asp137 contributes to the ATP binding site. Arg140 and Ser193 together coordinate L-citrulline. Asp195 lines the ATP pocket. Positions 202, 204, and 281 each coordinate L-citrulline.

This sequence belongs to the argininosuccinate synthase family. Type 2 subfamily. Homotetramer.

It is found in the cytoplasm. The catalysed reaction is L-citrulline + L-aspartate + ATP = 2-(N(omega)-L-arginino)succinate + AMP + diphosphate + H(+). It participates in amino-acid biosynthesis; L-arginine biosynthesis; L-arginine from L-ornithine and carbamoyl phosphate: step 2/3. The chain is Argininosuccinate synthase (argG) from Pasteurella multocida (strain Pm70).